The primary structure comprises 481 residues: Proline--tRNA ligase (481 aa).

This sequence belongs to the class-II aminoacyl-tRNA synthetase family. ProS type 3 subfamily. As to quaternary structure, homodimer.

The protein resides in the cytoplasm. It carries out the reaction tRNA(Pro) + L-proline + ATP = L-prolyl-tRNA(Pro) + AMP + diphosphate. Functionally, catalyzes the attachment of proline to tRNA(Pro) in a two-step reaction: proline is first activated by ATP to form Pro-AMP and then transferred to the acceptor end of tRNA(Pro). This chain is Proline--tRNA ligase, found in Chlorobaculum tepidum (strain ATCC 49652 / DSM 12025 / NBRC 103806 / TLS) (Chlorobium tepidum).